The following is a 432-amino-acid chain: Neuronal pentraxin-1 (432 aa).

The first 22 residues, 1–22 (MPAGRAARTCALLALCLLGAGA), serve as a signal peptide directing secretion. The disordered stretch occupies residues 90–122 (ESQSTLDPGAGEARAGGGRKQPGSGKNTMGDLS). N154 and N193 each carry an N-linked (GlcNAc...) asparagine glycan. Positions 226-428 (DKFQLTFPLR…GATKWTFEAC (203 aa)) constitute a Pentraxin (PTX) domain. An intrachain disulfide couples C256 to C316. N280, E358, Q359, D360, and Q370 together coordinate Ca(2+).

As to quaternary structure, homooligomer or heterooligomer (probably pentamer) with neuronal pentraxin receptor (NPTXR). Ca(2+) serves as cofactor.

Its subcellular location is the secreted. The protein resides in the cytoplasmic vesicle. The protein localises to the secretory vesicle. It localises to the endoplasmic reticulum. Functionally, may be involved in mediating uptake of synaptic material during synapse remodeling or in mediating the synaptic clustering of AMPA glutamate receptors at a subset of excitatory synapses. This Homo sapiens (Human) protein is Neuronal pentraxin-1 (NPTX1).